Here is a 222-residue protein sequence, read N- to C-terminus: Recombination protein RecR (222 aa).

The C4-type zinc finger occupies 57–72; sequence CPVCFNITDAERCDVC. The 94-residue stretch at 80–173 folds into the Toprim domain; the sequence is SVICVVEEPG…VVSRIAYGLP (94 aa). The segment at 189–222 is disordered; that stretch reads ALSGRRRVSEPASPPPPRRNDEEQDGAPARPPSH.

It belongs to the RecR family.

In terms of biological role, may play a role in DNA repair. It seems to be involved in an RecBC-independent recombinational process of DNA repair. It may act with RecF and RecO. This Deinococcus geothermalis (strain DSM 11300 / CIP 105573 / AG-3a) protein is Recombination protein RecR.